The following is a 166-amino-acid chain: Lipoprotein signal peptidase (166 aa).

4 consecutive transmembrane segments (helical) span residues 10–30 (GGALAPWLGISLIVILFDQLT), 32–52 (IAVLKTFAYGAMHALTPFFNL), 71–91 (WQRWAFTALGIGATLVICYLL), and 100–120 (FSLSLALILGGALGNVIDRLI). Catalysis depends on residues Asp-126 and Asp-144. A helical membrane pass occupies residues 135-155 (WHWPAFNLADSAITVGAVLLI).

It belongs to the peptidase A8 family.

It localises to the cell inner membrane. The catalysed reaction is Release of signal peptides from bacterial membrane prolipoproteins. Hydrolyzes -Xaa-Yaa-Zaa-|-(S,diacylglyceryl)Cys-, in which Xaa is hydrophobic (preferably Leu), and Yaa (Ala or Ser) and Zaa (Gly or Ala) have small, neutral side chains.. The protein operates within protein modification; lipoprotein biosynthesis (signal peptide cleavage). This protein specifically catalyzes the removal of signal peptides from prolipoproteins. This is Lipoprotein signal peptidase from Burkholderia mallei (strain ATCC 23344).